Consider the following 666-residue polypeptide: 7SK snRNA methylphosphate capping enzyme (666 aa).

Residue methionine 1 is modified to N-acetylmethionine. Basic and acidic residues predominate over residues 1–10; that stretch reads MIEMAAEKEP. Residues 1-141 form a disordered region; sequence MIEMAAEKEP…GSGGSFKHPA (141 aa). Residues 50-61 show a composition bias toward low complexity; that stretch reads GPGPRAHSAGAA. The residue at position 57 (serine 57) is a Phosphoserine. Arginine 91 carries the omega-N-methylarginine modification. 3 positions are modified to phosphoserine: serine 126, serine 150, and serine 154. Threonine 188 bears the Phosphothreonine mark. Serine 191, serine 192, and serine 229 each carry phosphoserine. The span at 235–244 shows a compositional bias: basic residues; that stretch reads RKRHRHRGPH. Residues 235–291 are disordered; sequence RKRHRHRGPHHQQQQQASGGNDSNAAVLPTDPLTPSLHGEGATQQQQNRGQNRDAPQ. Residues 245–254 show a composition bias toward low complexity; that stretch reads HQQQQQASGG. Phosphothreonine is present on threonine 268. 2 positions are modified to phosphoserine: serine 307 and serine 321. Low complexity predominate over residues 309-337; the sequence is LPSALQGSSGSLSAPPAASVTSAPSTSSS. Positions 309 to 383 are disordered; sequence LPSALQGSSG…HHHPLPATGF (75 aa). Basic residues predominate over residues 338–347; it reads SRHRKRRRTS. Position 368 is a phosphoserine (serine 368). S-adenosyl-L-methionine is bound by residues tyrosine 399, arginine 410, 428 to 430, 451 to 452, 536 to 537, and phenylalanine 558; these read GCN, DI, and NY. Residues 408–663 form the Bin3-type SAM domain; sequence DVRLRVLKPE…PVYLFHKARS (256 aa). Lysine 620 is covalently cross-linked (Glycyl lysine isopeptide (Lys-Gly) (interchain with G-Cter in SUMO2)).

The protein belongs to the methyltransferase superfamily. Core component of the 7SK RNP complex, at least composed of 7SK RNA, LARP7, MEPCE, HEXIM1 (or HEXIM2) and P-TEFb (composed of CDK9 and CCNT1/cyclin-T1). Interacts with METTL16. Interacts with RBM7; upon genotoxic stress this interaction is enhanced, triggering the release of inactive P-TEFb complex from the core, yielding to P-TEFb complex activation. Post-translationally, dephosphorylated at Ser-126 by the PNUTS-PP1 complex, promoting RNA polymerase II transcription pause-release.

It is found in the nucleus. It carries out the reaction a 5'-end triphospho-guanosine-ribonucleotide-snRNA + S-adenosyl-L-methionine = a 5'-end methyltriphosphate-guanosine-ribonucleotide-snRNA + S-adenosyl-L-homocysteine. In terms of biological role, S-adenosyl-L-methionine-dependent methyltransferase that adds a methylphosphate cap at the 5'-end of 7SK snRNA (7SK RNA), leading to stabilize it. Also has a non-enzymatic function as part of the 7SK RNP complex: the 7SK RNP complex sequesters the positive transcription elongation factor b (P-TEFb) in a large inactive 7SK RNP complex preventing RNA polymerase II phosphorylation and subsequent transcriptional elongation. The 7SK RNP complex also promotes snRNA gene transcription by RNA polymerase II via interaction with the little elongation complex (LEC). In the 7SK RNP complex, MEPCE is required to stabilize 7SK RNA and facilitate the assembly of 7SK RNP complex. MEPCE has a non-enzymatic function in the 7SK RNP complex; it has a non-enzymatic function; interaction with LARP7 within the 7SK RNP complex occluding its catalytic center. Also required for stability of U6 snRNAs. The chain is 7SK snRNA methylphosphate capping enzyme from Mus musculus (Mouse).